The following is a 262-amino-acid chain: uncharacterized protein (262 aa).

Belongs to the glycosyltransferase 2 family.

This is an uncharacterized protein from Mycobacterium tuberculosis (strain CDC 1551 / Oshkosh).